The chain runs to 218 residues: Large ribosomal subunit protein bL25 (218 aa).

It belongs to the bacterial ribosomal protein bL25 family. CTC subfamily. In terms of assembly, part of the 50S ribosomal subunit; part of the 5S rRNA/L5/L18/L25 subcomplex. Contacts the 5S rRNA. Binds to the 5S rRNA independently of L5 and L18.

Functionally, this is one of the proteins that binds to the 5S RNA in the ribosome where it forms part of the central protuberance. This is Large ribosomal subunit protein bL25 from Polaromonas naphthalenivorans (strain CJ2).